The primary structure comprises 352 residues: Mitochondrial ubiquitin ligase activator of NFKB 1 (352 aa).

Over 1–8 (MENGGRPS) the chain is Cytoplasmic. The chain crosses the membrane as a helical span at residues 9–29 (LCQFILLGTTSVVTAALYSVY). At 30–238 (RQKAWVSQEL…LLQRQESSVR (209 aa)) the chain is on the mitochondrial intermembrane side. Lysine 52 participates in a covalent cross-link: Glycyl lysine isopeptide (Lys-Gly) (interchain with G-Cter in ubiquitin). The chain crosses the membrane as a helical span at residues 239–259 (LWKVLALVFGFATCATLFFIL). Residues 260–352 (RKQYLQRQER…ITRVIPLYNS (93 aa)) are Cytoplasmic-facing. Glycyl lysine isopeptide (Lys-Gly) (interchain with G-Cter in ubiquitin) cross-links involve residues lysine 273 and lysine 299. Residues 302–340 (CVVCLSSFKSCVFLECGHVCSCTECYRALPEPKKCPICR) form an RING-type zinc finger.

In terms of assembly, homooligomer. Interacts with MAP3K7/TAK1. Interacts with UBC9. Interacts with and sumoylates DNM1L. Interacts with MAVS. Interacts with TP53 (via N-terminus); the interaction leads to ubiquitination and proteasomal degradation of TP53. In terms of processing, ubiquitinated by PRKN during mitophagy, leading to its degradation and enhancement of mitophagy. Deubiquitinated by USP30.

It is found in the mitochondrion outer membrane. It localises to the peroxisome. It catalyses the reaction S-ubiquitinyl-[E2 ubiquitin-conjugating enzyme]-L-cysteine + [acceptor protein]-L-lysine = [E2 ubiquitin-conjugating enzyme]-L-cysteine + N(6)-ubiquitinyl-[acceptor protein]-L-lysine.. Its pathway is protein modification; protein ubiquitination. The protein operates within protein modification; protein sumoylation. Exhibits weak E3 ubiquitin-protein ligase activity. E3 ubiquitin ligases accept ubiquitin from an E2 ubiquitin-conjugating enzyme in the form of a thioester and then directly transfer the ubiquitin to targeted substrates. Can ubiquitinate AKT1 preferentially at 'Lys-284' involving 'Lys-48'-linked polyubiquitination and seems to be involved in regulation of Akt signaling by targeting phosphorylated Akt to proteasomal degradation. Mediates polyubiquitination of cytoplasmic TP53 at 'Lys-24' which targets TP53 for proteasomal degradation, thus reducing TP53 levels in the cytoplasm and mitochondrion. Proposed to preferentially act as a SUMO E3 ligase at physiological concentrations. Plays a role in the control of mitochondrial morphology by promoting mitochondrial fragmentation, and influences mitochondrial localization. Likely to promote mitochondrial fission through negatively regulating the mitochondrial fusion proteins MFN1 and MFN2, acting in a pathway that is parallel to the PRKN/PINK1 regulatory pathway. May also be involved in the sumoylation of the membrane fission protein DNM1L. Inhibits cell growth. When overexpressed, activates JNK through MAP3K7/TAK1 and induces caspase-dependent apoptosis. Involved in the modulation of innate immune defense against viruses by inhibiting RIGI-dependent antiviral response. Can mediate RIGI sumoylation and disrupt its polyubiquitination. This is Mitochondrial ubiquitin ligase activator of NFKB 1 (MUL1) from Macaca fascicularis (Crab-eating macaque).